Consider the following 163-residue polypeptide: Protein-export protein SecB (163 aa).

Belongs to the SecB family. Homotetramer, a dimer of dimers. One homotetramer interacts with 1 SecA dimer.

It is found in the cytoplasm. Functionally, one of the proteins required for the normal export of preproteins out of the cell cytoplasm. It is a molecular chaperone that binds to a subset of precursor proteins, maintaining them in a translocation-competent state. It also specifically binds to its receptor SecA. The polypeptide is Protein-export protein SecB (Methylibium petroleiphilum (strain ATCC BAA-1232 / LMG 22953 / PM1)).